The sequence spans 416 residues: Leu/Ile/Val-binding protein homolog 4 (416 aa).

The first 26 residues, 1–26 (MSLKVFLQAGVACAALSLAGAAGASA), serve as a signal peptide directing secretion.

Belongs to the leucine-binding protein family.

Its function is as follows. Component of an amino-acid transport system. This Brucella abortus (strain 2308) protein is Leu/Ile/Val-binding protein homolog 4.